A 292-amino-acid chain; its full sequence is Putative peptidyl-prolyl cis-trans isomerase NifM (292 aa).

A PpiC domain is found at His148–Ser243.

Belongs to the PpiC/parvulin rotamase family.

It catalyses the reaction [protein]-peptidylproline (omega=180) = [protein]-peptidylproline (omega=0). Its function is as follows. Required for the activation and stabilization of the iron-component (NifH) of nitrogenase. Probable PPIase. The chain is Putative peptidyl-prolyl cis-trans isomerase NifM (nifM) from Azotobacter vinelandii.